A 432-amino-acid polypeptide reads, in one-letter code: 5'-deoxyadenosine deaminase (432 aa).

Residues His-63 and His-65 each contribute to the Zn(2+) site. Substrate-binding residues include Glu-92 and His-184. Zn(2+) is bound at residue His-211. Residues Glu-214 and Asp-299 each contribute to the substrate site. Zn(2+) is bound at residue Asp-299.

This sequence belongs to the metallo-dependent hydrolases superfamily. MTA/SAH deaminase family. Homotetramer. Zn(2+) serves as cofactor.

It carries out the reaction 5'-deoxyadenosine + H2O + H(+) = 5'-deoxyinosine + NH4(+). The enzyme catalyses S-adenosyl-L-homocysteine + H2O + H(+) = S-inosyl-L-homocysteine + NH4(+). It catalyses the reaction S-methyl-5'-thioadenosine + H2O + H(+) = S-methyl-5'-thioinosine + NH4(+). The catalysed reaction is adenosine + H2O + H(+) = inosine + NH4(+). The protein operates within amino-acid biosynthesis; S-adenosyl-L-methionine biosynthesis. In terms of biological role, catalyzes the deamination of three SAM-derived enzymatic products, namely 5'-deoxyadenosine, S-adenosyl-L-homocysteine, and 5'-methylthioadenosine, to produce the inosine analogs. Can also deaminate adenosine. The preferred substrate for this enzyme is 5'-deoxyadenosine, but all these substrates are efficiently deaminated. Likely functions in a S-adenosyl-L-methionine (SAM) recycling pathway from S-adenosyl-L-homocysteine (SAH) produced from SAM-dependent methylation reactions. May also be involved in the recycling of 5'-deoxyadenosine, whereupon the 5'-deoxyribose moiety of 5'-deoxyinosine is further metabolized to deoxyhexoses used for the biosynthesis of aromatic amino acids in methanogens. The protein is 5'-deoxyadenosine deaminase of Methanosarcina mazei (strain ATCC BAA-159 / DSM 3647 / Goe1 / Go1 / JCM 11833 / OCM 88) (Methanosarcina frisia).